Consider the following 292-residue polypeptide: tRNA(Ile)-lysidine synthase (292 aa).

Position 32-37 (32-37 (SGGADS)) interacts with ATP.

This sequence belongs to the tRNA(Ile)-lysidine synthase family.

It is found in the cytoplasm. It carries out the reaction cytidine(34) in tRNA(Ile2) + L-lysine + ATP = lysidine(34) in tRNA(Ile2) + AMP + diphosphate + H(+). Ligates lysine onto the cytidine present at position 34 of the AUA codon-specific tRNA(Ile) that contains the anticodon CAU, in an ATP-dependent manner. Cytidine is converted to lysidine, thus changing the amino acid specificity of the tRNA from methionine to isoleucine. The sequence is that of tRNA(Ile)-lysidine synthase from Corynebacterium diphtheriae (strain ATCC 700971 / NCTC 13129 / Biotype gravis).